We begin with the raw amino-acid sequence, 510 residues long: Light-independent protochlorophyllide reductase subunit B (510 aa).

Aspartate 36 lines the [4Fe-4S] cluster pocket. The active-site Proton donor is aspartate 296. Position 431-432 (431-432 (GM)) interacts with substrate.

It belongs to the ChlB/BchB/BchZ family. As to quaternary structure, protochlorophyllide reductase is composed of three subunits; ChlL, ChlN and ChlB. Forms a heterotetramer of two ChlB and two ChlN subunits. It depends on [4Fe-4S] cluster as a cofactor.

The enzyme catalyses chlorophyllide a + oxidized 2[4Fe-4S]-[ferredoxin] + 2 ADP + 2 phosphate = protochlorophyllide a + reduced 2[4Fe-4S]-[ferredoxin] + 2 ATP + 2 H2O. It participates in porphyrin-containing compound metabolism; chlorophyll biosynthesis (light-independent). Its function is as follows. Component of the dark-operative protochlorophyllide reductase (DPOR) that uses Mg-ATP and reduced ferredoxin to reduce ring D of protochlorophyllide (Pchlide) to form chlorophyllide a (Chlide). This reaction is light-independent. The NB-protein (ChlN-ChlB) is the catalytic component of the complex. This is Light-independent protochlorophyllide reductase subunit B from Synechococcus sp. (strain JA-2-3B'a(2-13)) (Cyanobacteria bacterium Yellowstone B-Prime).